A 219-amino-acid polypeptide reads, in one-letter code: MSTCGMCAGSSYCPHHQRASWPAHDHRSPPPVEYHDFFHHSVQGQAAAWLRLDNPPLPQPAEHDQAAAGMIHGGHRHGTFELNRPLMDDQHLLQMPPPPTIMPFGGGTFGDTMGREAIMAVDGEMMMVAAHHPTMHEREAKVMRYREKKKRRRYEKQIRYESRKAYAEMRPRVKGRFAKVPGSAAPPSPPPSGPRIYIASCFKSNGTVIVQEVMHDLPI.

A CCT domain is found at arginine 138–valine 180.

As to expression, mainly expressed in leaves, and at low levels in the shoot apical meristem (SAM).

The protein resides in the nucleus. Functionally, involved in the regulation of vernalization; this process in essential for flowering in cv. Bd29-1 but seems do not occur in cv. Bd21. The polypeptide is Protein VERNALIZATION 2 (Brachypodium distachyon (Purple false brome)).